The sequence spans 413 residues: MAP kinase-interacting serine/threonine-protein kinase 1 (413 aa).

Positions 1–26 (MGSSEPLPIVDSDKRRKKKRKTRATD) are disordered. Threonine 22 carries the phosphothreonine; by PAK2 modification. Serine 27 bears the Phosphoserine; by PAK2 mark. In terms of domain architecture, Protein kinase spans 37–321 (QLTSELLGEG…AAQVLQHPWV (285 aa)). ATP contacts are provided by residues 43 to 51 (LGEGAYAKV) and lysine 66. Residue aspartate 158 is the Proton acceptor of the active site. Serine 168 and serine 173 each carry phosphoserine. Threonine 197, threonine 202, and threonine 332 each carry phosphothreonine.

It belongs to the protein kinase superfamily. CAMK Ser/Thr protein kinase family. In terms of assembly, interacts with the C-terminal regions of EIF4G1 and EIF4G2. Also binds to dephosphorylated ERK1 and ERK2, and to the p38 kinases. Mg(2+) is required as a cofactor. Post-translationally, dual phosphorylation of Thr-197 and Thr-202 activates the kinase. Phosphorylation of Thr-332 activates the kinase. MAPK3/ERK1 is one of the kinases which activate MKNK1/MNK1. Phosphorylation by PAK2 leads to a reduced phosphorylation of EIF4G1.

It carries out the reaction L-seryl-[protein] + ATP = O-phospho-L-seryl-[protein] + ADP + H(+). It catalyses the reaction L-threonyl-[protein] + ATP = O-phospho-L-threonyl-[protein] + ADP + H(+). With respect to regulation, phosphorylated and activated by the p38 kinases and kinases in the Erk pathway. Its function is as follows. May play a role in the response to environmental stress and cytokines. Appears to regulate translation by phosphorylating EIF4E, thus increasing the affinity of this protein for the 7-methylguanosine-containing mRNA cap. In Rattus norvegicus (Rat), this protein is MAP kinase-interacting serine/threonine-protein kinase 1 (Mknk1).